We begin with the raw amino-acid sequence, 422 residues long: UDP-N-acetylglucosamine 1-carboxyvinyltransferase (422 aa).

Residue 22–23 (KN) coordinates phosphoenolpyruvate. Arg93 provides a ligand contact to UDP-N-acetyl-alpha-D-glucosamine. Cys117 functions as the Proton donor in the catalytic mechanism. The residue at position 117 (Cys117) is a 2-(S-cysteinyl)pyruvic acid O-phosphothioketal. UDP-N-acetyl-alpha-D-glucosamine is bound by residues 122-126 (RPVDL), Asp308, and Leu330.

The protein belongs to the EPSP synthase family. MurA subfamily.

It is found in the cytoplasm. The enzyme catalyses phosphoenolpyruvate + UDP-N-acetyl-alpha-D-glucosamine = UDP-N-acetyl-3-O-(1-carboxyvinyl)-alpha-D-glucosamine + phosphate. It participates in cell wall biogenesis; peptidoglycan biosynthesis. Cell wall formation. Adds enolpyruvyl to UDP-N-acetylglucosamine. This Helicobacter pylori (strain HPAG1) protein is UDP-N-acetylglucosamine 1-carboxyvinyltransferase.